Here is a 359-residue protein sequence, read N- to C-terminus: MKKYLALALIAPLLISCSTTKKGGTYNEAWVKDTNGFDILMGQFAHNIENIWGFKEVVIAGPKDYVKYTDQYQTRSHINFDDGTITIETIAGTEPAAHLRRAIIKTLLMGDDPSSVDLYSDVDDITISKEPFLYGQVVDNTGQPIRWEGRASNFADYLLKNRLKSRSNGLRIIYSVTINMVPNHLDKRAHKYLGMVRQASRKYGVDESLILAIMQTESSFNPYAVSRSDALGLMQVVQHTAGKDVFRSQGKSGTPSRSFLFDPASNIDTGTAYLAMLNNVYLGGIDNPTSRRYAVITAYNGGAGSVLRVFSNDKIQAANIINTMTPGDVYQTLTTRHPSAESRRYLYKVNTAQKSYRRR.

The signal sequence occupies residues 1–16 (MKKYLALALIAPLLIS). Cys-17 carries the N-palmitoyl cysteine lipid modification. Cys-17 is lipidated: S-diacylglycerol cysteine.

The protein belongs to the transglycosylase Slt family.

It localises to the cell outer membrane. It carries out the reaction Exolytic cleavage of the (1-&gt;4)-beta-glycosidic linkage between N-acetylmuramic acid (MurNAc) and N-acetylglucosamine (GlcNAc) residues in peptidoglycan, from either the reducing or the non-reducing ends of the peptidoglycan chains, with concomitant formation of a 1,6-anhydrobond in the MurNAc residue.. In terms of biological role, murein-degrading enzyme. May play a role in recycling of muropeptides during cell elongation and/or cell division. The polypeptide is Membrane-bound lytic murein transglycosylase C (Escherichia coli O157:H7).